Reading from the N-terminus, the 668-residue chain is Biosynthetic arginine decarboxylase (668 aa).

An N6-(pyridoxal phosphate)lysine modification is found at Lys105. 286-296 is a substrate binding site; sequence LDVGGGLGVDY.

The protein belongs to the Orn/Lys/Arg decarboxylase class-II family. SpeA subfamily. Mg(2+) is required as a cofactor. Requires pyridoxal 5'-phosphate as cofactor.

The enzyme catalyses L-arginine + H(+) = agmatine + CO2. Its function is as follows. Catalyzes the biosynthesis of agmatine from arginine. The chain is Biosynthetic arginine decarboxylase from Rhodopirellula baltica (strain DSM 10527 / NCIMB 13988 / SH1).